Consider the following 305-residue polypeptide: Probable xyloglucan endotransglucosylase/hydrolase protein 21 (305 aa).

Residues 1–25 (MVSSTLLVMSISLFLGLSILLVVHG) form the signal peptide. Residues 26 to 216 (KDFNQDIDIT…WSQGPFVASF (191 aa)) form the GH16 domain. N46 carries an N-linked (GlcNAc...) asparagine glycan. The Nucleophile role is filled by E102. E106 (proton donor) is an active-site residue. Position 106 (E106) interacts with xyloglucan. N-linked (GlcNAc...) asparagine glycosylation occurs at N110. Xyloglucan-binding positions include 119-121 (HTN) and 129-131 (DRE). N146 is a glycosylation site (N-linked (GlcNAc...) asparagine). Xyloglucan is bound by residues 195 to 196 (DW) and G200. N206 and N231 each carry an N-linked (GlcNAc...) asparagine glycan. 2 disulfide bridges follow: C225-C239 and C282-C296. The span at 236–253 (TSPCSPGDSTSSSSSSTS) shows a compositional bias: low complexity. The tract at residues 236–258 (TSPCSPGDSTSSSSSSTSEWFSQ) is disordered. R287 lines the xyloglucan pocket.

It belongs to the glycosyl hydrolase 16 family. XTH group 2 subfamily. In terms of processing, contains at least one intrachain disulfide bond essential for its enzymatic activity. As to expression, predominantly expressed in green siliques.

It is found in the secreted. The protein localises to the cell wall. It localises to the extracellular space. Its subcellular location is the apoplast. The catalysed reaction is breaks a beta-(1-&gt;4) bond in the backbone of a xyloglucan and transfers the xyloglucanyl segment on to O-4 of the non-reducing terminal glucose residue of an acceptor, which can be a xyloglucan or an oligosaccharide of xyloglucan.. Functionally, catalyzes xyloglucan endohydrolysis (XEH) and/or endotransglycosylation (XET). Cleaves and religates xyloglucan polymers, an essential constituent of the primary cell wall, and thereby participates in cell wall construction of growing tissues. This Arabidopsis thaliana (Mouse-ear cress) protein is Probable xyloglucan endotransglucosylase/hydrolase protein 21 (XTH21).